The sequence spans 89 residues: Phytosulfokines 1 (89 aa).

Positions 1–22 (MVNPGRTARALCLLCLALLLLG) are cleaved as a signal peptide. A propeptide spanning residues 23 to 79 (QDTHSRKLLLQEKHSHGVGNGTTTTQEPSRENGGSTGSNNNGQLQFDSAKWEEFHTD) is cleaved from the precursor. The tract at residues 33–70 (QEKHSHGVGNGTTTTQEPSRENGGSTGSNNNGQLQFDS) is disordered. N-linked (GlcNAc...) asparagine glycosylation is present at Asn-42. Sulfotyrosine occurs at positions 80 and 82. Residues 85 to 89 (DVKKP) constitute a propeptide that is removed on maturation.

Belongs to the phytosulfokine family. In terms of processing, sulfation is important for activity and for the binding to a putative membrane receptor. PSK-alpha is produced by endopeptidase digestion. PSK-beta is produced from PSK-alpha by exopeptidase digestion. As to expression, expressed throughout the seedling. More abundant in fragments containing shoot or root apexes where cells proliferate vigorously.

The protein resides in the secreted. Its function is as follows. Promotes plant cell differentiation, organogenesis and somatic embryogenesis as well as cell proliferation. In Oryza sativa subsp. japonica (Rice), this protein is Phytosulfokines 1 (PSK1).